A 294-amino-acid polypeptide reads, in one-letter code: Very long chain fatty acid elongase 5 (294 aa).

7 consecutive transmembrane segments (helical) span residues 26 to 46 (WLLL…LLIV), 64 to 84 (ILVV…YELV), 112 to 132 (VLWW…FFIL), 141 to 161 (FLHI…MNWV), 172 to 192 (FNSF…IPAI), 207 to 227 (LVQF…PCGF), and 231 to 251 (WLYF…NFYI). A disordered region spans residues 261–294 (AKKDPRHNGIKSVNGHSNGASHTNAVKNRKARTD). The segment covering 274 to 286 (NGHSNGASHTNAV) has biased composition (polar residues).

The protein belongs to the ELO family. ELOVL5 subfamily. Expression is highest in intestine, followed by brain and heart, and lowest in gill. Also expressed in liver, spleen and muscle.

Its subcellular location is the endoplasmic reticulum membrane. It is found in the cell projection. The protein resides in the dendrite. It carries out the reaction a very-long-chain acyl-CoA + malonyl-CoA + H(+) = a very-long-chain 3-oxoacyl-CoA + CO2 + CoA. The enzyme catalyses (6Z,9Z,12Z)-octadecatrienoyl-CoA + malonyl-CoA + H(+) = (8Z,11Z,14Z)-3-oxoeicosatrienoyl-CoA + CO2 + CoA. The catalysed reaction is (9Z,12Z,15Z)-octadecatrienoyl-CoA + malonyl-CoA + H(+) = (11Z,14Z,17Z)-3-oxoeicosatrienoyl-CoA + CO2 + CoA. It catalyses the reaction (9Z)-hexadecenoyl-CoA + malonyl-CoA + H(+) = 3-oxo-(11Z)-octadecenoyl-CoA + CO2 + CoA. It carries out the reaction (9Z)-octadecenoyl-CoA + malonyl-CoA + H(+) = 3-oxo-(11Z)-eicosenoyl-CoA + CO2 + CoA. The enzyme catalyses (11Z)-octadecenoyl-CoA + malonyl-CoA + H(+) = 3-oxo-(13Z)-eicosenoyl-CoA + CO2 + CoA. The catalysed reaction is (9Z,12Z)-octadecadienoyl-CoA + malonyl-CoA + H(+) = (11Z,14Z)-3-oxoicosa-11,14-dienoyl-CoA + CO2 + CoA. It catalyses the reaction (6Z,9Z,12Z,15Z)-octadecatetraenoyl-CoA + malonyl-CoA + H(+) = (8Z,11Z,14Z,17Z)-3-oxoicosatetraenoyl-CoA + CO2 + CoA. It carries out the reaction (5Z,8Z,11Z,14Z)-eicosatetraenoyl-CoA + malonyl-CoA + H(+) = (7Z,10Z,13Z,16Z)-3-oxodocosatetraenoyl-CoA + CO2 + CoA. The enzyme catalyses (5Z,8Z,11Z,14Z,17Z)-eicosapentaenoyl-CoA + malonyl-CoA + H(+) = 3-oxo-(7Z,10Z,13Z,16Z,19Z)-docosapentaenoyl-CoA + CO2 + CoA. Its pathway is lipid metabolism; polyunsaturated fatty acid biosynthesis. Functionally, catalyzes the first and rate-limiting reaction of the four reactions that constitute the long-chain fatty acids elongation cycle. This endoplasmic reticulum-bound enzymatic process allows the addition of 2 carbons to the chain of long- and very long-chain fatty acids (VLCFAs) per cycle. Condensing enzyme that acts specifically toward polyunsaturated acyl-CoA with the higher activity toward C18:3(n-6) acyl-CoA. May participate in the production of monounsaturated and of polyunsaturated VLCFAs of different chain lengths that are involved in multiple biological processes as precursors of membrane lipids and lipid mediators. In conditions where the essential linoleic and alpha linoleic fatty acids are lacking it is also involved in the synthesis of Mead acid from oleic acid. This chain is Very long chain fatty acid elongase 5, found in Tachysurus fulvidraco (Yellow catfish).